The following is a 393-amino-acid chain: Xylose transport system permease protein XylH (393 aa).

Residues 1 to 24 (MSKSNPSEVKLAVPTSGGFSGLKS) are Periplasmic-facing. A helical membrane pass occupies residues 25 to 45 (LNLQVFVMIAAIIAIMLFFTW). Over 46–64 (TTDGAYLSARNVSNLLRQT) the chain is Cytoplasmic. The chain crosses the membrane as a helical span at residues 65-85 (AITGILAVGMVFVIISAEIDL). The Periplasmic segment spans residues 86–102 (SVGSMMGLLGGVAAICD). The chain crosses the membrane as a helical span at residues 103 to 123 (VWLGWPLPLTIIVTLVLGLLL). Over 124–135 (GAWNGWWVAYRK) the chain is Cytoplasmic. A helical transmembrane segment spans residues 136-156 (VPSFIVTLAGMLAFRGILIGI). The Periplasmic portion of the chain corresponds to 157 to 175 (TNGTTVSPTSAAMSQIGQS). A helical membrane pass occupies residues 176–196 (YLPASTGFIIGALGLMAFVGW). The Cytoplasmic segment spans residues 197-214 (QWRGRMRRQALGLQSPAS). A helical transmembrane segment spans residues 215–235 (TAVVGRQALTAIIVLGAIWLL). The Periplasmic segment spans residues 236–239 (NDYR). Residues 240-260 (GVPTPVLLLTLLLLGGMFMAT) form a helical membrane-spanning segment. At 261 to 287 (RTAFGRRIYAIGGNLEAARLSGINVER) the chain is on the cytoplasmic side. The chain crosses the membrane as a helical span at residues 288–308 (TKLAVFAINGLMVAIAGLILS). Over 309–312 (SRLG) the chain is Periplasmic. The chain crosses the membrane as a helical span at residues 313-333 (AGSPSAGNIAELDAIAACVIG). Over 334-336 (GTS) the chain is Cytoplasmic. A helical transmembrane segment spans residues 337 to 357 (LAGGVGSVAGAVMGAFIMASL). Topologically, residues 358 to 365 (DNGMSMMD) are periplasmic. A helical membrane pass occupies residues 366–386 (VPTFWQYIVKGAILLLAVWMD). The Cytoplasmic portion of the chain corresponds to 387-393 (SATKRRS).

The protein belongs to the binding-protein-dependent transport system permease family. AraH/RbsC subfamily.

It localises to the cell inner membrane. Its function is as follows. Part of the binding-protein-dependent transport system for D-xylose. Probably responsible for the translocation of the substrate across the membrane. The chain is Xylose transport system permease protein XylH (xylH) from Escherichia coli O6:H1 (strain CFT073 / ATCC 700928 / UPEC).